A 188-amino-acid chain; its full sequence is dCTP deaminase (188 aa).

DCTP is bound by residues 111–116 (KSTYAR), 135–137 (TLE), Gln-156, Tyr-170, and Gln-180. Glu-137 functions as the Proton donor/acceptor in the catalytic mechanism.

Belongs to the dCTP deaminase family. Homotrimer.

The enzyme catalyses dCTP + H2O + H(+) = dUTP + NH4(+). The protein operates within pyrimidine metabolism; dUMP biosynthesis; dUMP from dCTP (dUTP route): step 1/2. Functionally, catalyzes the deamination of dCTP to dUTP. In Thiobacillus denitrificans (strain ATCC 25259 / T1), this protein is dCTP deaminase.